The sequence spans 63 residues: Large ribosomal subunit protein eL37 (63 aa).

Zn(2+) contacts are provided by cysteine 20, cysteine 23, cysteine 35, and cysteine 38. The C4-type zinc-finger motif lies at 20–38; the sequence is CRRCGRHSFNVRKGYCVAC.

The protein belongs to the eukaryotic ribosomal protein eL37 family. It depends on Zn(2+) as a cofactor.

Its function is as follows. Binds to the 23S rRNA. In Ignicoccus hospitalis (strain KIN4/I / DSM 18386 / JCM 14125), this protein is Large ribosomal subunit protein eL37.